Here is a 26-residue protein sequence, read N- to C-terminus: Muscarinic toxin-like protein 1 (26 aa).

It belongs to the three-finger toxin family. Short-chain subfamily. Orphan group VIII (haditoxin) sub-subfamily. In terms of assembly, homodimer; non-covalently linked. Expressed by the venom gland.

The protein localises to the secreted. Antagonist of muscle and neuronal nicotinic acetylcholine receptors (nAChR) with highest affinity for neuronal alpha-7/CHRNA7 nAChRs. The polypeptide is Muscarinic toxin-like protein 1 (Naja naja (Indian cobra)).